A 534-amino-acid polypeptide reads, in one-letter code: Bifunctional purine biosynthesis protein PurH (534 aa).

The 146-residue stretch at 6-151 (TRLPVRRALI…KNHKDVAIVV (146 aa)) folds into the MGS-like domain.

It belongs to the PurH family.

The catalysed reaction is (6R)-10-formyltetrahydrofolate + 5-amino-1-(5-phospho-beta-D-ribosyl)imidazole-4-carboxamide = 5-formamido-1-(5-phospho-D-ribosyl)imidazole-4-carboxamide + (6S)-5,6,7,8-tetrahydrofolate. It catalyses the reaction IMP + H2O = 5-formamido-1-(5-phospho-D-ribosyl)imidazole-4-carboxamide. It functions in the pathway purine metabolism; IMP biosynthesis via de novo pathway; 5-formamido-1-(5-phospho-D-ribosyl)imidazole-4-carboxamide from 5-amino-1-(5-phospho-D-ribosyl)imidazole-4-carboxamide (10-formyl THF route): step 1/1. It participates in purine metabolism; IMP biosynthesis via de novo pathway; IMP from 5-formamido-1-(5-phospho-D-ribosyl)imidazole-4-carboxamide: step 1/1. The protein is Bifunctional purine biosynthesis protein PurH of Stutzerimonas stutzeri (strain A1501) (Pseudomonas stutzeri).